The following is a 302-amino-acid chain: Meiotic recombination protein rec14 (302 aa).

WD repeat units follow at residues Ala-14–Val-51, Pro-57–Leu-96, Gln-101–Glu-140, Asp-142–Ser-184, Gly-185–Arg-226, Gly-227–Thr-266, and Glu-269–Glu-302.

Component of the DSB catalytic core (DSBC) complex, composed of at least rec12, rec6 and rec14. The complex interacts with mde2.

Required for formation of the rec12-mediated double-strand breaks (DSBs) that initiate meiotic recombination. The polypeptide is Meiotic recombination protein rec14 (Schizosaccharomyces pombe (strain 972 / ATCC 24843) (Fission yeast)).